Here is a 334-residue protein sequence, read N- to C-terminus: Coiled-coil domain-containing protein 89 (334 aa).

Positions 75–318 (EAAQRFQSER…EAYKKHSGDL (244 aa)) form a coiled coil.

Belongs to the CCDC89 family. As to quaternary structure, interacts (via C-terminus) with hey1/bc8 (via Orange domain). As to expression, in adults, expressed at varying levels in different organs including the liver and brain, with highest expression in the testis.

It localises to the cytoplasm. The protein localises to the nucleus. The protein is Coiled-coil domain-containing protein 89 of Xenopus laevis (African clawed frog).